We begin with the raw amino-acid sequence, 239 residues long: Large ribosomal subunit protein uL1 (239 aa).

It belongs to the universal ribosomal protein uL1 family. In terms of assembly, part of the 50S ribosomal subunit.

Functionally, binds directly to 23S rRNA. The L1 stalk is quite mobile in the ribosome, and is involved in E site tRNA release. Protein L1 is also a translational repressor protein, it controls the translation of the L11 operon by binding to its mRNA. This chain is Large ribosomal subunit protein uL1, found in Rickettsia africae (strain ESF-5).